The following is a 961-amino-acid chain: Roundabout homolog 4 (961 aa).

A signal peptide spans 1-37; it reads MGQGEELRAAVDSGGMGLLGTKCPLPLLLLFIMGGKA. Ig-like C2-type domains are found at residues 42–142 and 148–235; these read PQIL…ARLS and EDFR…ARVS. Cystine bridges form between C63-C125 and C169-C218. 2 N-linked (GlcNAc...) asparagine glycosylation sites follow: N211 and N257. 2 consecutive Fibronectin type-III domains span residues 259 to 356 and 358 to 453; these read TLLN…LPEQ and PSAP…LEQA. N-linked (GlcNAc...) asparagine glycans are attached at residues N371, N400, and N407. The span at 544 to 559 shows a compositional bias: low complexity; it reads SGSRDLSSSSSLSSRL. Disordered stretches follow at residues 544-563 and 600-634; these read SGSR…GVDP and QTSS…SSDS. A compositionally biased stretch (polar residues) spans 623–634; sequence TGTSSPWASSDS. 2 N-linked (GlcNAc...) asparagine glycosylation sites follow: N691 and N723. The tract at residues 726 to 810 is disordered; sequence ELAARPLPPT…SLEEEDQDSV (85 aa). The segment covering 755-769 has biased composition (low complexity); it reads LQAPSSDPLPAAPLS. Over residues 770–783 the composition is skewed to polar residues; the sequence is VLNSSRPSSPQASF. Residues N772 and N793 are each glycosylated (N-linked (GlcNAc...) asparagine). Positions 784–801 are enriched in low complexity; it reads LSVPSPGSSNLSSSSLSS. The residue at position 823 (S823) is a Phosphoserine.

The protein belongs to the immunoglobulin superfamily. ROBO family. In terms of assembly, interacts with SLIT2 and ENAH.

In terms of biological role, receptor for Slit proteins, at least for SLIT2, and seems to be involved in angiogenesis and vascular patterning. May mediate the inhibition of primary endothelial cell migration by Slit proteins. Involved in the maintenance of endothelial barrier organization and function. In Rattus norvegicus (Rat), this protein is Roundabout homolog 4 (Robo4).